The sequence spans 767 residues: Protein transport protein Sec23B (767 aa).

A2 carries the N-acetylalanine modification. The Zn(2+) site is built by C61, C66, C85, and C88. At K564 the chain carries N6-acetyllysine. Residues 634 to 720 form a Gelsolin-like repeat; the sequence is PEPVLLDSSS…EHGGSQARFL (87 aa).

It belongs to the SEC23/SEC24 family. SEC23 subfamily. As to quaternary structure, COPII is composed of at least five proteins: the Sec23/24 complex, the Sec13/31 complex and Sar1. Interacts with SAR1A.

Its subcellular location is the cytoplasmic vesicle. It is found in the COPII-coated vesicle membrane. The protein resides in the endoplasmic reticulum membrane. It localises to the cytoplasm. The protein localises to the cytosol. Component of the coat protein complex II (COPII) which promotes the formation of transport vesicles from the endoplasmic reticulum (ER). The coat has two main functions, the physical deformation of the endoplasmic reticulum membrane into vesicles and the selection of cargo molecules for their transport to the Golgi complex. In Mus musculus (Mouse), this protein is Protein transport protein Sec23B.